A 236-amino-acid polypeptide reads, in one-letter code: tRNA1(Val) (adenine(37)-N6)-methyltransferase (236 aa).

Belongs to the methyltransferase superfamily. tRNA (adenine-N(6)-)-methyltransferase family.

It is found in the cytoplasm. The catalysed reaction is adenosine(37) in tRNA1(Val) + S-adenosyl-L-methionine = N(6)-methyladenosine(37) in tRNA1(Val) + S-adenosyl-L-homocysteine + H(+). Specifically methylates the adenine in position 37 of tRNA(1)(Val) (anticodon cmo5UAC). This is tRNA1(Val) (adenine(37)-N6)-methyltransferase from Histophilus somni (strain 129Pt) (Haemophilus somnus).